Reading from the N-terminus, the 187-residue chain is dTTP/UTP pyrophosphatase (187 aa).

D65 functions as the Proton acceptor in the catalytic mechanism.

Belongs to the Maf family. YhdE subfamily. It depends on a divalent metal cation as a cofactor.

It localises to the cytoplasm. It catalyses the reaction dTTP + H2O = dTMP + diphosphate + H(+). The catalysed reaction is UTP + H2O = UMP + diphosphate + H(+). Its function is as follows. Nucleoside triphosphate pyrophosphatase that hydrolyzes dTTP and UTP. May have a dual role in cell division arrest and in preventing the incorporation of modified nucleotides into cellular nucleic acids. The polypeptide is dTTP/UTP pyrophosphatase (Pyrococcus abyssi (strain GE5 / Orsay)).